A 402-amino-acid polypeptide reads, in one-letter code: Alanine racemase (402 aa).

The Proton acceptor; specific for D-alanine role is filled by lysine 34. Lysine 34 bears the N6-(pyridoxal phosphate)lysine mark. Arginine 133 serves as a coordination point for substrate. The RPE1 insert domain occupies 226-271; that stretch reads EVSYNLSYKEKFERNTPALATTVCINKCADVNTRLTYKVPLKGSYR. Residue tyrosine 296 is the Proton acceptor; specific for L-alanine of the active site. Methionine 344 contacts substrate.

This sequence belongs to the alanine racemase family. Pyridoxal 5'-phosphate serves as cofactor.

It catalyses the reaction L-alanine = D-alanine. Its pathway is amino-acid biosynthesis; D-alanine biosynthesis; D-alanine from L-alanine: step 1/1. Catalyzes the interconversion of L-alanine and D-alanine. May also act on other amino acids. This chain is Alanine racemase (alr), found in Rickettsia typhi (strain ATCC VR-144 / Wilmington).